Here is a 428-residue protein sequence, read N- to C-terminus: Glutamate-1-semialdehyde 2,1-aminomutase 1 (428 aa).

N6-(pyridoxal phosphate)lysine is present on Lys268.

Belongs to the class-III pyridoxal-phosphate-dependent aminotransferase family. HemL subfamily. As to quaternary structure, homodimer. The cofactor is pyridoxal 5'-phosphate.

It is found in the cytoplasm. The enzyme catalyses (S)-4-amino-5-oxopentanoate = 5-aminolevulinate. The protein operates within porphyrin-containing compound metabolism; protoporphyrin-IX biosynthesis; 5-aminolevulinate from L-glutamyl-tRNA(Glu): step 2/2. This Bacillus cereus (strain G9842) protein is Glutamate-1-semialdehyde 2,1-aminomutase 1.